Consider the following 304-residue polypeptide: ADP-polyphosphate phosphotransferase (304 aa).

Belongs to the polyphosphate kinase 2 (PPK2) family. Class I subfamily.

It catalyses the reaction [phosphate](n) + ATP = [phosphate](n+1) + ADP. Functionally, uses inorganic polyphosphate (polyP) as a donor to convert ADP to ATP. The chain is ADP-polyphosphate phosphotransferase from Pseudomonas aeruginosa (strain ATCC 15692 / DSM 22644 / CIP 104116 / JCM 14847 / LMG 12228 / 1C / PRS 101 / PAO1).